Reading from the N-terminus, the 91-residue chain is CLAVATA3/ESR (CLE)-related protein 27 (91 aa).

An N-terminal signal peptide occupies residues 1–35 (MTHAREWRSSLTTTLLMVILLSYMLHLFCVYSRVG). A hydroxyproline mark is found at Pro83 and Pro86. O-linked (Ara...) hydroxyproline glycosylation occurs at Pro86.

It belongs to the CLV3/ESR signal peptide family. The O-glycosylation (arabinosylation) of the hydroxyproline Pro-86 enhances binding affinity of the CLE27p peptide for its receptor. As to expression, mostly expressed in apex, and, to a lower extent, in roots, leaves, flowers and siliques.

It localises to the secreted. The protein localises to the extracellular space. Functionally, extracellular signal peptide that regulates cell fate. Represses root apical meristem maintenance. The protein is CLAVATA3/ESR (CLE)-related protein 27 of Arabidopsis thaliana (Mouse-ear cress).